The sequence spans 568 residues: MAGUK p55 subfamily member 3 (568 aa).

2 consecutive L27 domains span residues 6–60 (EDSG…ERQS) and 61–118 (PTPV…FDPV). Positions 137 to 218 (IVRLVKNKEP…SITLKIIPAT (82 aa)) constitute a PDZ domain. The 71-residue stretch at 226–296 (DSKVFMRALF…PSKQFQERRL (71 aa)) folds into the SH3 domain. The residue at position 307 (Ser-307) is a Phosphoserine. The Guanylate kinase-like domain occupies 385 to 568 (PRLVVLIGSL…QEPAASSELS (184 aa)).

This sequence belongs to the MAGUK family. As to quaternary structure, interacts with HTR2C; this interaction stabilizes the receptor at the plasma membrane and prevents the desensitization of the HTR2C receptor-mediated calcium response. Interacts with HTR2A. Interacts with HTR4. Interacts (via PDZ domain) with CADM1 (via C-terminus)Interacts (via PDZ domain) with CADM1; this interaction connects CADM1 with DLG1. Interacts (via Guanylate kinase-like domain) with PALS1. Interacts with DLG1 (via N-terminus); this interaction connects CADM1 with DLG1 and links CADM1 with the regulatory subunit of phosphoinositide-3-kinase (PI3K) by forming a multiprotein complex and participates in cell spreading. Expressed in brain, skeletal muscle, testis, kidney, and lung.

It localises to the apical cell membrane. The protein resides in the cell membrane. The protein localises to the cell junction. Its subcellular location is the adherens junction. Participates in cell spreading through the phosphoinositide-3-kinase (PI3K) pathway by connecting CADM1 to DLG1 and the regulatory subunit of phosphoinositide-3-kinase (PI3K). Stabilizes HTR2C at the plasma membrane and prevents its desensitization. May participates in the maintenance of adherens junctions. This Mus musculus (Mouse) protein is MAGUK p55 subfamily member 3.